An 89-amino-acid chain; its full sequence is Small ribosomal subunit protein uS15 (89 aa).

This sequence belongs to the universal ribosomal protein uS15 family. Part of the 30S ribosomal subunit. Forms a bridge to the 50S subunit in the 70S ribosome, contacting the 23S rRNA.

In terms of biological role, one of the primary rRNA binding proteins, it binds directly to 16S rRNA where it helps nucleate assembly of the platform of the 30S subunit by binding and bridging several RNA helices of the 16S rRNA. Its function is as follows. Forms an intersubunit bridge (bridge B4) with the 23S rRNA of the 50S subunit in the ribosome. In Halalkalibacterium halodurans (strain ATCC BAA-125 / DSM 18197 / FERM 7344 / JCM 9153 / C-125) (Bacillus halodurans), this protein is Small ribosomal subunit protein uS15.